The chain runs to 160 residues: Cyclic pyranopterin monophosphate synthase (160 aa).

Substrate-binding positions include 77-79 (MCH) and 114-115 (ME). Asp129 is an active-site residue.

It belongs to the MoaC family. Homohexamer; trimer of dimers.

The enzyme catalyses (8S)-3',8-cyclo-7,8-dihydroguanosine 5'-triphosphate = cyclic pyranopterin phosphate + diphosphate. Its pathway is cofactor biosynthesis; molybdopterin biosynthesis. Catalyzes the conversion of (8S)-3',8-cyclo-7,8-dihydroguanosine 5'-triphosphate to cyclic pyranopterin monophosphate (cPMP). This chain is Cyclic pyranopterin monophosphate synthase, found in Listeria monocytogenes serovar 1/2a (strain ATCC BAA-679 / EGD-e).